The following is a 474-amino-acid chain: uncharacterized protein (474 aa).

The span at 1–11 (MGGSDFEDDEL) shows a compositional bias: acidic residues. A disordered region spans residues 1-163 (MGGSDFEDDE…ETSPFNREDG (163 aa)). Residues 12-25 (FKDLYGEENEKKVE) are compositionally biased toward basic and acidic residues. Residues 27-39 (ASGNQETSNVTPT) show a composition bias toward polar residues. A compositionally biased stretch (basic and acidic residues) spans 40-76 (KENEGYEELEKSGEAGAERTKENPFREEPGADFDRSG). Residues 129–140 (NDNYNENQSALT) are compositionally biased toward polar residues. 2 consecutive RRM domains span residues 163-245 (GKMF…EQEK) and 247-324 (AKMF…RATP). The interval 412-474 (DPSKMNQGTG…GGHSFHPYRR (63 aa)) is disordered. Residues 425 to 434 (PFSPSMPSGS) show a composition bias toward low complexity. Gly residues predominate over residues 435-444 (SRGGYHGRNP).

Its subcellular location is the nucleus. This is an uncharacterized protein from Schizosaccharomyces pombe (strain 972 / ATCC 24843) (Fission yeast).